Reading from the N-terminus, the 1130-residue chain is Serine/threonine-protein kinase LATS1 (1130 aa).

Positions 1 to 11 are enriched in basic and acidic residues; the sequence is MKRSEKPEGYR. The tract at residues 1 to 71 is disordered; it reads MKRSEKPEGY…PRQVRNPPKF (71 aa). Polar residues predominate over residues 19-30; the sequence is PASNYTVSSRQM. Basic and acidic residues predominate over residues 46 to 64; that stretch reads DAAKAEHNMSKMSTEDPRQ. The UBA domain occupies 100–141; sequence EVNPQMLQDLQAAGFDEDMVIQALQKTNNRSIEAAIEFISKM. Residues 149–276 form a disordered region; the sequence is EQMAAAAARP…SWEPNSQTKR (128 aa). The span at 167 to 179 shows a compositional bias: polar residues; the sequence is NVQQSVNRKQSWK. Residues 235 to 268 are compositionally biased toward pro residues; the sequence is NPPPPPQVRSVTPPPPPRGQTPPPRGTTPPPPSW. Phosphothreonine is present on Thr246. Position 278 is a phosphoserine (Ser278). Disordered stretches follow at residues 294-321, 365-405, 432-484, and 515-631; these read GAWQ…RGIS, AGTV…NGSI, NWPQ…PSAT, and THPS…ESRI. The span at 300-312 shows a compositional bias: pro residues; it reads YPPPPLNTSPMNP. The PPxY motif 1 motif lies at 373-376; sequence PPPY. Residues 381–405 are compositionally biased toward polar residues; it reads ANGQSPSALQTGGSAAPSSYTNGSI. The segment covering 434 to 447 has biased composition (low complexity); sequence PQSSSAPAQSSPSS. Polar residues predominate over residues 454–482; the sequence is WQPNIPVRSNSFNNPLGNRASHSANSQPS. Position 464 is a phosphoserine; by NUAK1 and NUAK2 (Ser464). The interval 526–655 is interaction with YAP1; sequence TVQPSPFPEG…HVENVLKSHQ (130 aa). Residues 556–559 carry the PPxY motif 2 motif; it reads PPPY. Over residues 579–609 the composition is skewed to basic and acidic residues; it reads PSKEDQPSLPKEDESEKSYENVDSGDKEKKQ. Ser613 carries the phosphoserine modification. The segment covering 621–630 has biased composition (basic and acidic residues); it reads KKDEERRESR. At Ser674 the chain carries Phosphoserine. Positions 705–1010 constitute a Protein kinase domain; that stretch reads FVKIKTLGIG…ADEIKAHPFF (306 aa). ATP is bound by residues 711–719 and Lys734; that span reads LGIGAFGEV. Asp828 (proton acceptor) is an active-site residue. Ser909 carries the post-translational modification Phosphoserine; by STK3/MST2. The region spanning 1011–1090 is the AGC-kinase C-terminal domain; that stretch reads KTIDFSSDLR…RRFFDDNGYP (80 aa). Position 1079 is a phosphothreonine; by STK3/MST2 (Thr1079). A disordered region spans residues 1104–1130; that stretch reads SQGSEQQSDEDDQNTGSEIKNRDLVYV.

Belongs to the protein kinase superfamily. AGC Ser/Thr protein kinase family. Complexes with CDK1 in early mitosis. LATS1-associated CDK1 has no mitotic cyclin partner and no apparent kinase activity. Binds phosphorylated ZYX, locating this protein to the mitotic spindle and suggesting a role for actin regulatory proteins during mitosis. Binds to and colocalizes with LIMK1 at the actomyosin contractile ring during cytokinesis. Interacts (via PPxY motif 2) with YAP1 (via WW domains). Interacts with MOB1A and MOB1B. Interacts with LIMD1, WTIP and AJUBA. Interacts with ESR1, DCAF1 and DCAF13; probably recruits DCAF1 and DCAF13 to ESR1 to promote ESR1 ubiquitination and ubiquitin-mediated proteasomal degradation. Interacts with STK3/MST2; this interaction is inhibited in the presence of DLG5. Interacts with SCRIB in the presence of DLG5. Interacts with WWTR1/TAZ. Interacts with WWC1, WWC2 and WWC3 (via their WW domains). Mg(2+) is required as a cofactor. In terms of processing, autophosphorylated and phosphorylated during M-phase of the cell cycle. Phosphorylated by STK3/MST2 at Ser-909 and Thr-1079, which results in its activation. Phosphorylated by MAP4Ks; in parallel to STK3/MST2 and resulting to its activation. Phosphorylation at Ser-464 by NUAK1 and NUAK2 leads to decreased protein level and is required to regulate cellular senescence and cellular ploidy. Expressed in all adult tissues examined except for lung and kidney.

The protein localises to the cytoplasm. The protein resides in the cytoskeleton. It localises to the microtubule organizing center. It is found in the centrosome. Its subcellular location is the spindle. The protein localises to the midbody. The protein resides in the spindle pole body. The enzyme catalyses L-seryl-[protein] + ATP = O-phospho-L-seryl-[protein] + ADP + H(+). The catalysed reaction is L-threonyl-[protein] + ATP = O-phospho-L-threonyl-[protein] + ADP + H(+). Functionally, negative regulator of YAP1 in the Hippo signaling pathway that plays a pivotal role in organ size control and tumor suppression by restricting proliferation and promoting apoptosis. The core of this pathway is composed of a kinase cascade wherein STK3/MST2 and STK4/MST1, in complex with its regulatory protein SAV1, phosphorylates and activates LATS1/2 in complex with its regulatory protein MOB1, which in turn phosphorylates and inactivates YAP1 oncoprotein and WWTR1/TAZ. Phosphorylation of YAP1 by LATS1 inhibits its translocation into the nucleus to regulate cellular genes important for cell proliferation, cell death, and cell migration. Acts as a tumor suppressor which plays a critical role in maintenance of ploidy through its actions in both mitotic progression and the G1 tetraploidy checkpoint. Negatively regulates G2/M transition by down-regulating CDK1 kinase activity. Involved in the control of p53 expression. Affects cytokinesis by regulating actin polymerization through negative modulation of LIMK1. May also play a role in endocrine function. Plays a role in mammary gland epithelial cell differentiation, both through the Hippo signaling pathway and the intracellular estrogen receptor signaling pathway by promoting the degradation of ESR1. Acts as an activator of the NLRP3 inflammasome by mediating phosphorylation of 'Ser-265' of NLRP3 following NLRP3 palmitoylation, promoting NLRP3 activation by NEK7. This is Serine/threonine-protein kinase LATS1 from Homo sapiens (Human).